The primary structure comprises 405 residues: Cytoplasmic tRNA 2-thiolation protein 2 (405 aa).

It belongs to the CTU2/NCS2 family.

It localises to the cytoplasm. It participates in tRNA modification; 5-methoxycarbonylmethyl-2-thiouridine-tRNA biosynthesis. Its function is as follows. Plays a central role in 2-thiolation of mcm(5)S(2)U at tRNA wobble positions of tRNA(Lys), tRNA(Glu) and tRNA(Gln). May act by forming a heterodimer with NCS6/CTU1 that ligates sulfur from thiocarboxylated URM1 onto the uridine of tRNAs at wobble position. In Drosophila pseudoobscura pseudoobscura (Fruit fly), this protein is Cytoplasmic tRNA 2-thiolation protein 2.